The primary structure comprises 433 residues: Trigger factor (433 aa).

The region spanning 161 to 246 (EDRATIDFTG…LKKVEERELP (86 aa)) is the PPIase FKBP-type domain.

It belongs to the FKBP-type PPIase family. Tig subfamily.

It localises to the cytoplasm. The catalysed reaction is [protein]-peptidylproline (omega=180) = [protein]-peptidylproline (omega=0). Its function is as follows. Involved in protein export. Acts as a chaperone by maintaining the newly synthesized protein in an open conformation. Functions as a peptidyl-prolyl cis-trans isomerase. The protein is Trigger factor of Edwardsiella ictaluri (strain 93-146).